A 249-amino-acid chain; its full sequence is MSSVNVDFEQAGELKIGQVGIANLRIRTLDVPRLVREMQDRVTRAPKLFGRAAVILDFGGLAQAPDLATAKALLDGLRSAGVLPVALAYGTSEIDLLSQQLGIPLLAKFRAQYETAAVSPPPPPPPPPARAEPAAPVARPAPGRMQRNAVRSGQQLYAENCDLTVLSTVGAGAEVIADGSIHIYGTLRGRALAGAQGNPDARIFCRDFHAELVAIAGHYKVLDDVPMDLRGKAVQVWLEQDQIKIAALD.

Positions 116–149 (AAVSPPPPPPPPPARAEPAAPVARPAPGRMQRNA) are disordered. Positions 119-130 (SPPPPPPPPPAR) are enriched in pro residues. Positions 131 to 142 (AEPAAPVARPAP) are enriched in low complexity.

The protein belongs to the MinC family. As to quaternary structure, interacts with MinD and FtsZ.

Cell division inhibitor that blocks the formation of polar Z ring septums. Rapidly oscillates between the poles of the cell to destabilize FtsZ filaments that have formed before they mature into polar Z rings. Prevents FtsZ polymerization. This chain is Probable septum site-determining protein MinC, found in Xanthomonas campestris pv. campestris (strain ATCC 33913 / DSM 3586 / NCPPB 528 / LMG 568 / P 25).